The chain runs to 428 residues: Serine--tRNA ligase (428 aa).

231-233 (TAE) is a binding site for L-serine. ATP is bound at residue 262-264 (RSE). Residue glutamate 285 coordinates L-serine. 349–352 (EISS) contributes to the ATP binding site. Residue serine 385 participates in L-serine binding.

This sequence belongs to the class-II aminoacyl-tRNA synthetase family. Type-1 seryl-tRNA synthetase subfamily. As to quaternary structure, homodimer. The tRNA molecule binds across the dimer.

The protein resides in the cytoplasm. It catalyses the reaction tRNA(Ser) + L-serine + ATP = L-seryl-tRNA(Ser) + AMP + diphosphate + H(+). The catalysed reaction is tRNA(Sec) + L-serine + ATP = L-seryl-tRNA(Sec) + AMP + diphosphate + H(+). It functions in the pathway aminoacyl-tRNA biosynthesis; selenocysteinyl-tRNA(Sec) biosynthesis; L-seryl-tRNA(Sec) from L-serine and tRNA(Sec): step 1/1. In terms of biological role, catalyzes the attachment of serine to tRNA(Ser). Is also able to aminoacylate tRNA(Sec) with serine, to form the misacylated tRNA L-seryl-tRNA(Sec), which will be further converted into selenocysteinyl-tRNA(Sec). The sequence is that of Serine--tRNA ligase from Cellvibrio japonicus (strain Ueda107) (Pseudomonas fluorescens subsp. cellulosa).